Consider the following 273-residue polypeptide: Putative pyruvate, phosphate dikinase regulatory protein (273 aa).

153-160 (GISRTSKT) contributes to the ADP binding site.

The protein belongs to the pyruvate, phosphate/water dikinase regulatory protein family. PDRP subfamily.

The catalysed reaction is N(tele)-phospho-L-histidyl/L-threonyl-[pyruvate, phosphate dikinase] + ADP = N(tele)-phospho-L-histidyl/O-phospho-L-threonyl-[pyruvate, phosphate dikinase] + AMP + H(+). It carries out the reaction N(tele)-phospho-L-histidyl/O-phospho-L-threonyl-[pyruvate, phosphate dikinase] + phosphate + H(+) = N(tele)-phospho-L-histidyl/L-threonyl-[pyruvate, phosphate dikinase] + diphosphate. Functionally, bifunctional serine/threonine kinase and phosphorylase involved in the regulation of the pyruvate, phosphate dikinase (PPDK) by catalyzing its phosphorylation/dephosphorylation. The protein is Putative pyruvate, phosphate dikinase regulatory protein of Agrobacterium fabrum (strain C58 / ATCC 33970) (Agrobacterium tumefaciens (strain C58)).